The chain runs to 146 residues: Interleukin-3 (146 aa).

A signal peptide spans 1 to 17 (MSSLSILHLLLLLLSLH). N65 is a glycosylation site (N-linked (GlcNAc...) asparagine).

The protein belongs to the IL-3 family. In terms of assembly, monomer. Activated T-cells, mast cells, natural killer cells.

It is found in the secreted. Functionally, granulocyte/macrophage colony-stimulating factors are cytokines that act in hematopoiesis by controlling the production, differentiation, and function of 2 related white cell populations of the blood, the granulocytes and the monocytes-macrophages. In terms of biological role, this CSF induces granulocytes, macrophages, mast cells, stem cells, erythroid cells, eosinophils and megakaryocytes. The sequence is that of Interleukin-3 (IL3) from Ovis aries (Sheep).